Reading from the N-terminus, the 367-residue chain is Leucine dehydrogenase (367 aa).

Lysine 80 is an active-site residue. 180 to 186 (GVGNVAY) contributes to the NAD(+) binding site.

The protein belongs to the Glu/Leu/Phe/Val dehydrogenases family. As to quaternary structure, homohexamer.

It catalyses the reaction L-leucine + NAD(+) + H2O = 4-methyl-2-oxopentanoate + NH4(+) + NADH + H(+). It participates in amino-acid degradation; L-leucine degradation; 4-methyl-2-oxopentanoate from L-leucine (dehydrogenase route): step 1/1. Catalyzes the reversible deamination of L-leucine to 4-methyl-2-oxopentanoate. This Geobacillus stearothermophilus (Bacillus stearothermophilus) protein is Leucine dehydrogenase (ldh).